Consider the following 254-residue polypeptide: Anamorsin homolog (254 aa).

The segment at 4 to 132 (VQENNHVLYI…EIGSAAKLSL (129 aa)) is N-terminal SAM-like domain. Residues 132-167 (LGGNKAKVAAVWKLDVDDDDDERIDEDELLDEEDKV) are linker. C177, C186, C189, and C191 together coordinate [2Fe-2S] cluster. The interval 177–191 (CGTTGKRKACKDCSC) is fe-S binding site A. [4Fe-4S] cluster-binding residues include C215, C218, C226, and C229. Short sequence motifs (cx2C motif) lie at residues 215–218 (CGSC) and 226–229 (CATC). A fe-S binding site B region spans residues 215–229 (CGSCYLGDAFRCATC).

It belongs to the anamorsin family. As to quaternary structure, monomer. The cofactor is [2Fe-2S] cluster. [4Fe-4S] cluster is required as a cofactor.

It localises to the cytoplasm. The protein resides in the mitochondrion intermembrane space. In terms of biological role, component of the cytosolic iron-sulfur (Fe-S) protein assembly (CIA) machinery. Required for the maturation of extramitochondrial Fe-S proteins. Part of an electron transfer chain functioning in an early step of cytosolic Fe-S biogenesis, facilitating the de novo assembly of a [4Fe-4S] cluster on the cytosolic Fe-S scaffold complex. Electrons are transferred from NADPH via a FAD- and FMN-containing diflavin oxidoreductase. Together with the diflavin oxidoreductase, also required for the assembly of the diferric tyrosyl radical cofactor of ribonucleotide reductase (RNR), probably by providing electrons for reduction during radical cofactor maturation in the catalytic small subunit. This Aedes aegypti (Yellowfever mosquito) protein is Anamorsin homolog.